The following is a 191-amino-acid chain: FMN reductase (NADPH) (191 aa).

Belongs to the SsuE family. In terms of assembly, homodimer.

It carries out the reaction FMNH2 + NADP(+) = FMN + NADPH + 2 H(+). Catalyzes an NADPH-dependent reduction of FMN, but is also able to reduce FAD or riboflavin. This chain is FMN reductase (NADPH) (ssuE), found in Escherichia coli (strain K12).